We begin with the raw amino-acid sequence, 212 residues long: Probable nicotinate-nucleotide adenylyltransferase (212 aa).

It belongs to the NadD family.

The catalysed reaction is nicotinate beta-D-ribonucleotide + ATP + H(+) = deamido-NAD(+) + diphosphate. It functions in the pathway cofactor biosynthesis; NAD(+) biosynthesis; deamido-NAD(+) from nicotinate D-ribonucleotide: step 1/1. Functionally, catalyzes the reversible adenylation of nicotinate mononucleotide (NaMN) to nicotinic acid adenine dinucleotide (NaAD). The polypeptide is Probable nicotinate-nucleotide adenylyltransferase (Shewanella sp. (strain MR-7)).